A 20-amino-acid chain; its full sequence is Agglutinin beta-2 chain isoform 1 (20 aa).

The span at 1 to 10 (TQSTGTSQTI) shows a compositional bias: polar residues. Residues 1-20 (TQSTGTSQTIAVGLWGGPDN) form a disordered region.

It belongs to the jacalin lectin family. As to quaternary structure, tetramer of four alpha chains associated with two or four beta chains.

Functionally, alpha-methyl-D-mannoside and D-mannose specific lectin. Binds IgA. The protein is Agglutinin beta-2 chain isoform 1 of Morus nigra (Black mulberry).